Here is a 275-residue protein sequence, read N- to C-terminus: Dihydroxyacetone phosphatase (275 aa).

Asp10 acts as the Nucleophile in catalysis. The Mg(2+) site is built by Asp10, Asp12, and Asp206. The Proton donor/acceptor role is filled by Asp12.

This sequence belongs to the HAD-like hydrolase superfamily. As to quaternary structure, homohexamer. Mg(2+) is required as a cofactor.

It carries out the reaction dihydroxyacetone phosphate + H2O = dihydroxyacetone + phosphate. In terms of biological role, catalyzes dephosphorylation of dihydroxyacetone phosphate (DHAP) to produce 1,3-dihydroxyacetone (DHA). Is the main enzyme responsible for DHA production from catabolism of sugars (glucose, fructose, and sucrose) in C.glutamicum. Displays no activity toward nucleoside monophosphates (AMP, CMP, GMP, or UMP). The protein is Dihydroxyacetone phosphatase of Corynebacterium glutamicum (strain R).